The primary structure comprises 206 residues: Large ribosomal subunit protein uL4 (206 aa).

The segment at lysine 62–glycine 85 is disordered.

This sequence belongs to the universal ribosomal protein uL4 family. In terms of assembly, part of the 50S ribosomal subunit.

Its function is as follows. One of the primary rRNA binding proteins, this protein initially binds near the 5'-end of the 23S rRNA. It is important during the early stages of 50S assembly. It makes multiple contacts with different domains of the 23S rRNA in the assembled 50S subunit and ribosome. Functionally, forms part of the polypeptide exit tunnel. This is Large ribosomal subunit protein uL4 from Rhodospirillum centenum (strain ATCC 51521 / SW).